Consider the following 227-residue polypeptide: Probable septum site-determining protein MinC (227 aa).

This sequence belongs to the MinC family. Interacts with MinD and FtsZ.

Functionally, cell division inhibitor that blocks the formation of polar Z ring septums. Rapidly oscillates between the poles of the cell to destabilize FtsZ filaments that have formed before they mature into polar Z rings. Prevents FtsZ polymerization. The sequence is that of Probable septum site-determining protein MinC from Geobacillus thermodenitrificans (strain NG80-2).